Reading from the N-terminus, the 84-residue chain is MERNLRKKRLGRVVSDKMDKTIVVAVETKVRHPLYGKTVNRTTKFKAHDENNEARFGDRVFIMETRPLSKDKRWRLVEIVEKAK.

Belongs to the universal ribosomal protein uS17 family. In terms of assembly, part of the 30S ribosomal subunit.

In terms of biological role, one of the primary rRNA binding proteins, it binds specifically to the 5'-end of 16S ribosomal RNA. In Clostridium perfringens (strain SM101 / Type A), this protein is Small ribosomal subunit protein uS17.